We begin with the raw amino-acid sequence, 152 residues long: Toxin Res (152 aa).

The protein belongs to the MbcT/ParT/Res family. In terms of assembly, homodimer. Forms a complex with cognate antitoxin Xre.

Functionally, toxic component of a type II toxin-antitoxin (TA) system. Expression in E.coli inhibits cell growth; bacteriostasis is neutralized by expression of cognate antitoxin Xre. Probably depletes intracellular NAD(+). The sequence is that of Toxin Res from Yersinia enterocolitica serotype O:8 / biotype 1B (strain NCTC 13174 / 8081).